Consider the following 65-residue polypeptide: Large ribosomal subunit protein bL28 (65 aa).

The tract at residues 1–21 (MAKKDQLTLRGPLYGNNRSHS) is disordered.

This sequence belongs to the bacterial ribosomal protein bL28 family.

This chain is Large ribosomal subunit protein bL28, found in Mycoplasma pneumoniae (strain ATCC 29342 / M129 / Subtype 1) (Mycoplasmoides pneumoniae).